The chain runs to 107 residues: MVKFAHVVAFLLLASLIQPLTARDLEINVLQLDVSQSGCPGVTKERWPELLGTPAKFAMQIIQKENPKLTNVQTILNGGPVTEDLRCNRVRLFVNVLDFIVQTPQIG.

The signal sequence occupies residues 1–22 (MVKFAHVVAFLLLASLIQPLTA). Residues 23–36 (RDLEINVLQLDVSQ) constitute a propeptide that is removed on maturation.

It belongs to the protease inhibitor I13 (potato type I serine protease inhibitor) family.

It is found in the secreted. This Nicotiana tabacum (Common tobacco) protein is Proteinase inhibitor I-A (TIMPB).